A 124-amino-acid chain; its full sequence is Large ribosomal subunit protein bL17 (124 aa).

It belongs to the bacterial ribosomal protein bL17 family. Part of the 50S ribosomal subunit. Contacts protein L32.

This Persephonella marina (strain DSM 14350 / EX-H1) protein is Large ribosomal subunit protein bL17.